A 101-amino-acid polypeptide reads, in one-letter code: Small ribosomal subunit protein uS14 (101 aa).

Belongs to the universal ribosomal protein uS14 family. Part of the 30S ribosomal subunit. Contacts proteins S3 and S10.

Binds 16S rRNA, required for the assembly of 30S particles and may also be responsible for determining the conformation of the 16S rRNA at the A site. The chain is Small ribosomal subunit protein uS14 from Shewanella baltica (strain OS155 / ATCC BAA-1091).